An 88-amino-acid chain; its full sequence is UPF0250 protein IL0958 (88 aa).

This sequence belongs to the UPF0250 family.

In Idiomarina loihiensis (strain ATCC BAA-735 / DSM 15497 / L2-TR), this protein is UPF0250 protein IL0958.